The sequence spans 526 residues: tRNA-2-methylthio-N(6)-dimethylallyladenosine synthase (526 aa).

Residues 14-130 form the MTTase N-terminal domain; the sequence is RTYQVRTYGC…LPTLLERARH (117 aa). [4Fe-4S] cluster contacts are provided by cysteine 23, cysteine 59, cysteine 93, cysteine 167, cysteine 171, and cysteine 174. One can recognise a Radical SAM core domain in the interval 153-401; it reads RESAYAGWVS…IELQERISLE (249 aa). The TRAM domain maps to 404-483; that stretch reads QAQVGRTLEL…PHHLIADGAL (80 aa).

It belongs to the methylthiotransferase family. MiaB subfamily. Monomer. Requires [4Fe-4S] cluster as cofactor.

The protein localises to the cytoplasm. It catalyses the reaction N(6)-dimethylallyladenosine(37) in tRNA + (sulfur carrier)-SH + AH2 + 2 S-adenosyl-L-methionine = 2-methylsulfanyl-N(6)-dimethylallyladenosine(37) in tRNA + (sulfur carrier)-H + 5'-deoxyadenosine + L-methionine + A + S-adenosyl-L-homocysteine + 2 H(+). Functionally, catalyzes the methylthiolation of N6-(dimethylallyl)adenosine (i(6)A), leading to the formation of 2-methylthio-N6-(dimethylallyl)adenosine (ms(2)i(6)A) at position 37 in tRNAs that read codons beginning with uridine. The protein is tRNA-2-methylthio-N(6)-dimethylallyladenosine synthase of Mycobacterium sp. (strain JLS).